The sequence spans 467 residues: Solute carrier family 52, riboflavin transporter, member 3 (467 aa).

The Cytoplasmic portion of the chain corresponds to 1-2 (MA). Residues 3–23 (FLIHLLVCTFGMGSWVAINGL) traverse the membrane as a helical segment. The Extracellular segment spans residues 24–43 (WVELPLLVTELPEGWYLPSY). A helical membrane pass occupies residues 44–64 (LTVIIQLANVGPLLVTLLHHF). Residues 65 to 71 (RPGCLSE) are Cytoplasmic-facing. A helical transmembrane segment spans residues 72-92 (VAVVFTVLGVGTIACTLFAFL). Over 93-105 (WNVTSWVLGSRHS) the chain is Extracellular. A glycan (N-linked (GlcNAc...) asparagine) is linked at Asn-94. The helical transmembrane segment at 106–126 (IAFLVLTFFLALVDCTSSVTF) threads the bilayer. Over 127 to 137 (LPFMSRLPTYY) the chain is Cytoplasmic. A helical transmembrane segment spans residues 138-158 (LTTFFVGEGLSGLLPALVALA). Residues 159 to 220 (QGSGLTTCVN…SRYLPANFSP (62 aa)) lie on the Extracellular side of the membrane. Asn-168 is a glycosylation site (N-linked (GlcNAc...) asparagine). The helical transmembrane segment at 221 to 241 (LVFFLLLSFMMACCFISFFFL) threads the bilayer. Residues 242–294 (QRQPKRWEASIEDLLTSQVTLNSIRPQEGKDLGPPEESGKAQDPPEEKTAPQH) are Cytoplasmic-facing. Ser-251 is subject to Phosphoserine. A disordered region spans residues 266-288 (RPQEGKDLGPPEESGKAQDPPEE). Residues 268 to 288 (QEGKDLGPPEESGKAQDPPEE) are compositionally biased toward basic and acidic residues. The chain crosses the membrane as a helical span at residues 295–315 (LAHLTFIYVLVAFVNALTNGV). The Extracellular portion of the chain corresponds to 316–333 (LPSVQTYSCLSYGPVAYH). A helical membrane pass occupies residues 334 to 354 (LSATLSSMASPLTCFLSIFLP). Over 355 to 359 (NRSLP) the chain is Cytoplasmic. A helical transmembrane segment spans residues 360–380 (FLGVLAVLGTSFGAYNMAMAV). Topologically, residues 381-394 (MSPCPFMQGHWGGE) are extracellular. The helical transmembrane segment at 395–415 (VLIVVSWVLFTGCLSYVKVML) threads the bilayer. Residues 416-425 (GVILRDHSRS) are Cytoplasmic-facing. The helical transmembrane segment at 426 to 446 (ALLWCGAAVQLGSLLGAVVMF) threads the bilayer. The Extracellular segment spans residues 447-467 (PLVNVLRLFSSADFCSLQCSA).

Belongs to the riboflavin transporter family.

It localises to the cell membrane. It catalyses the reaction riboflavin(in) = riboflavin(out). Its function is as follows. Plasma membrane transporter mediating the uptake by cells of the water soluble vitamin B2/riboflavin that plays a key role in biochemical oxidation-reduction reactions of the carbohydrate, lipid, and amino acid metabolism. This chain is Solute carrier family 52, riboflavin transporter, member 3 (SLC52A3), found in Bos taurus (Bovine).